The chain runs to 236 residues: Protein CUSTOS (236 aa).

2 disordered regions span residues 1–57 (MSES…GTTP) and 83–236 (VEPA…KKDE). Basic and acidic residues-rich tracts occupy residues 10 to 51 (NTAR…HDGN) and 156 to 165 (EKTEEKSTKE). The Nucleolar localization signal (NLS1) motif lies at 173 to 181 (KMKKKKKRK). Basic and acidic residues predominate over residues 182–196 (TSSEESQDKVNHQTE). A compositionally biased stretch (polar residues) spans 197-210 (KQSNVEGNQEQTTA). The short motif at 211–219 (GERLKKKKK) is the Nucleolar localization signal (NLS2) element. Residues 214–227 (LKKKKKKKKKKRKK) are compositionally biased toward basic residues.

This sequence belongs to the CUSTOS family. As to quaternary structure, interacts (via NLS1 and NLS2) with dvl2; the interaction is negatively regulated by Wnt stimulation. Interacts with csnk1a1. Interacts with ctnnb1; the interaction is positively regulated by Wnt stimulation. Post-translationally, phosphorylated by ck1/csnk1a1.

The protein localises to the nucleus envelope. In terms of biological role, essential for Spemann-Mangold organizer formation and subsequent anterior head development in the embryo. Inhibits canonical Wnt signaling pathway by antagonizing nuclear import of beta-catenin (ctnnb1) during embryogenesis. The chain is Protein CUSTOS from Danio rerio (Zebrafish).